A 204-amino-acid chain; its full sequence is Glycerol-3-phosphate acyltransferase (204 aa).

5 helical membrane-spanning segments follow: residues 8-28 (ILIFAYLLGSINSAIIVCYIF), 53-73 (VPAAITLIFDILKGLVPVVIA), 81-101 (FITACTALYAILGHIFPIFFG), 116-136 (FGFSWILGLIFVITWLCVAII), and 155-175 (VIFTSDLQVAAPFLIIAIIIL).

Belongs to the PlsY family. In terms of assembly, probably interacts with PlsX.

It localises to the cell inner membrane. It carries out the reaction an acyl phosphate + sn-glycerol 3-phosphate = a 1-acyl-sn-glycero-3-phosphate + phosphate. It functions in the pathway lipid metabolism; phospholipid metabolism. Catalyzes the transfer of an acyl group from acyl-phosphate (acyl-PO(4)) to glycerol-3-phosphate (G3P) to form lysophosphatidic acid (LPA). This enzyme utilizes acyl-phosphate as fatty acyl donor, but not acyl-CoA or acyl-ACP. This is Glycerol-3-phosphate acyltransferase from Francisella tularensis subsp. mediasiatica (strain FSC147).